A 336-amino-acid polypeptide reads, in one-letter code: Galectin-12 (336 aa).

2 Galectin domains span residues Tyr-49–Leu-183 and Cys-212–Ser-336.

As to expression, not widely expressed. Predominantly expressed in adipose tissue.

It localises to the nucleus. Its function is as follows. Binds lactose. May participate in the apoptosis of adipocytes. The sequence is that of Galectin-12 (LGALS12) from Homo sapiens (Human).